A 179-amino-acid chain; its full sequence is Probable chorismate pyruvate-lyase (179 aa).

Arginine 82, leucine 120, and glutamate 165 together coordinate substrate.

It belongs to the UbiC family.

Its subcellular location is the cytoplasm. It catalyses the reaction chorismate = 4-hydroxybenzoate + pyruvate. The protein operates within cofactor biosynthesis; ubiquinone biosynthesis. Its function is as follows. Removes the pyruvyl group from chorismate, with concomitant aromatization of the ring, to provide 4-hydroxybenzoate (4HB) for the ubiquinone pathway. The protein is Probable chorismate pyruvate-lyase of Vibrio vulnificus (strain CMCP6).